A 116-amino-acid polypeptide reads, in one-letter code: Large ribosomal subunit protein bL20c (116 aa).

This sequence belongs to the bacterial ribosomal protein bL20 family.

It is found in the plastid. Its subcellular location is the chloroplast. Binds directly to 23S ribosomal RNA and is necessary for the in vitro assembly process of the 50S ribosomal subunit. It is not involved in the protein synthesizing functions of that subunit. The chain is Large ribosomal subunit protein bL20c from Ipomoea purpurea (Common morning glory).